We begin with the raw amino-acid sequence, 241 residues long: Uridylate kinase (241 aa).

Residues 10-13 (KLSG), Gly-53, and Arg-57 contribute to the ATP site. Residues Asp-72 and 133 to 140 (AGSPYFST) contribute to the UMP site. Residues Asn-161, Tyr-167, and Asp-170 each coordinate ATP.

Belongs to the UMP kinase family. Homohexamer.

It is found in the cytoplasm. The catalysed reaction is UMP + ATP = UDP + ADP. The protein operates within pyrimidine metabolism; CTP biosynthesis via de novo pathway; UDP from UMP (UMPK route): step 1/1. Inhibited by UTP. In terms of biological role, catalyzes the reversible phosphorylation of UMP to UDP. The protein is Uridylate kinase of Aster yellows witches'-broom phytoplasma (strain AYWB).